Here is a 208-residue protein sequence, read N- to C-terminus: MSSVDTEKPAPPPLETEAPPPPPPPPPPPPPPPPPPAGYSALDVVLRILLLGSAVASVVVMVTSVQTKLIAVAGVPVLVSNKAKFQNSPAFIYFVAALSVVGLYSIITTLASFIFISKPSCSTKTILHLAIWDVLMLGLAASATGTAGGVAYVGLKGNSHVGWNKVCNTYDKFCRHVGGSIAVALFASILLVLLVWLSLFTLYSRIRK.

Residues 1–36 (MSSVDTEKPAPPPLETEAPPPPPPPPPPPPPPPPPP) are disordered. Topologically, residues 1–41 (MSSVDTEKPAPPPLETEAPPPPPPPPPPPPPPPPPPAGYSA) are cytoplasmic. Over residues 9 to 36 (PAPPPLETEAPPPPPPPPPPPPPPPPPP) the composition is skewed to pro residues. A helical transmembrane segment spans residues 42–62 (LDVVLRILLLGSAVASVVVMV). Residues 63 to 89 (TSVQTKLIAVAGVPVLVSNKAKFQNSP) lie on the Extracellular side of the membrane. The chain crosses the membrane as a helical span at residues 90-110 (AFIYFVAALSVVGLYSIITTL). The Cytoplasmic segment spans residues 111–133 (ASFIFISKPSCSTKTILHLAIWD). Residues 134 to 154 (VLMLGLAASATGTAGGVAYVG) traverse the membrane as a helical segment. At 155-180 (LKGNSHVGWNKVCNTYDKFCRHVGGS) the chain is on the extracellular side. Residues 181–201 (IAVALFASILLVLLVWLSLFT) form a helical membrane-spanning segment. The Cytoplasmic portion of the chain corresponds to 202 to 208 (LYSRIRK).

Belongs to the Casparian strip membrane proteins (CASP) family. Homodimer and heterodimers.

It localises to the cell membrane. The sequence is that of CASP-like protein 1D1 from Vitis vinifera (Grape).